We begin with the raw amino-acid sequence, 184 residues long: Cytidylate kinase (184 aa).

8 to 16 (GQPGSGKTT) is a binding site for ATP.

This sequence belongs to the cytidylate kinase family. Type 2 subfamily.

Its subcellular location is the cytoplasm. It carries out the reaction CMP + ATP = CDP + ADP. The enzyme catalyses dCMP + ATP = dCDP + ADP. The polypeptide is Cytidylate kinase (Pyrobaculum calidifontis (strain DSM 21063 / JCM 11548 / VA1)).